We begin with the raw amino-acid sequence, 397 residues long: Acetate kinase (397 aa).

Position 8 (N8) interacts with Mg(2+). K15 contributes to the ATP binding site. Position 89 (R89) interacts with substrate. D146 serves as the catalytic Proton donor/acceptor. ATP contacts are provided by residues 206 to 210 (HLGNG), 281 to 283 (DLR), and 329 to 333 (GIGEN). Residue E382 coordinates Mg(2+).

This sequence belongs to the acetokinase family. In terms of assembly, homodimer. Requires Mg(2+) as cofactor. The cofactor is Mn(2+).

It localises to the cytoplasm. It catalyses the reaction acetate + ATP = acetyl phosphate + ADP. Its pathway is metabolic intermediate biosynthesis; acetyl-CoA biosynthesis; acetyl-CoA from acetate: step 1/2. In terms of biological role, catalyzes the formation of acetyl phosphate from acetate and ATP. Can also catalyze the reverse reaction. The chain is Acetate kinase from Geobacillus sp. (strain WCH70).